Here is a 192-residue protein sequence, read N- to C-terminus: Photosystem I assembly protein Ycf4 (192 aa).

Transmembrane regions (helical) follow at residues 30-52 and 72-94; these read YFWATAVSIGGLGFFLAGLSSYL and IAIGFYGVAALLLATYLWLAIAW.

The protein belongs to the Ycf4 family.

The protein resides in the cellular thylakoid membrane. In terms of biological role, seems to be required for the assembly of the photosystem I complex. In Thermosynechococcus vestitus (strain NIES-2133 / IAM M-273 / BP-1), this protein is Photosystem I assembly protein Ycf4.